A 72-amino-acid polypeptide reads, in one-letter code: DNA-directed RNA polymerase subunit epsilon (72 aa).

The protein belongs to the RNA polymerase subunit epsilon family. In terms of assembly, RNAP is composed of a core of 2 alpha, a beta and a beta' subunit. The core is associated with a delta subunit, and at least one of epsilon or omega. When a sigma factor is associated with the core the holoenzyme is formed, which can initiate transcription.

The catalysed reaction is RNA(n) + a ribonucleoside 5'-triphosphate = RNA(n+1) + diphosphate. Functionally, a non-essential component of RNA polymerase (RNAP). This is DNA-directed RNA polymerase subunit epsilon from Staphylococcus haemolyticus (strain JCSC1435).